The sequence spans 249 residues: Molybdate/tungstate transport system permease protein WtpB (249 aa).

Residues 1–10 (MDRRDYLAYA) lie on the Cytoplasmic side of the membrane. A helical transmembrane segment spans residues 11–31 (FAGLGAFLVAFIGLPLFMIFI). Residues 32–56 (KQAYDLEALQRTLVDPLVIESIRNS) lie on the Extracellular side of the membrane. The region spanning 53–239 (IRNSLFTATV…TISLAVFIFL (187 aa)) is the ABC transmembrane type-1 domain. Residues 57–77 (LFTATVSTLLGILFGVPLGYV) form a helical membrane-spanning segment. Over 78-96 (LARKEFKGKNFVQALIDTP) the chain is Cytoplasmic. The helical transmembrane segment at 97-117 (IVIPHSVVGIMLLVTFSDAIL) threads the bilayer. Position 118 (aspartate 118) is a topological domain, extracellular. The chain crosses the membrane as a helical span at residues 119–139 (NYKGIVAVMLFVSSPFIVNSA). The Cytoplasmic segment spans residues 140–179 (RDGFLSVDEKLEYVARTLGASGLRTFFSVTLPNAIHSIAS). A helical membrane pass occupies residues 180–200 (GAIMAWARAISEVGAILIVAY). The Extracellular segment spans residues 201–223 (YPKTAQVLIMEYFNNYGLRASRP). The helical transmembrane segment at 224-244 (IAVILVTISLAVFIFLRWLVG) threads the bilayer. The Cytoplasmic segment spans residues 245-249 (RGRNA).

The protein belongs to the binding-protein-dependent transport system permease family. The complex is composed of two ATP-binding proteins (WtpC), two transmembrane proteins (WtpB) and a solute-binding protein (WtpA).

Its subcellular location is the cell membrane. Part of the ABC transporter complex WtpABC involved in molybdate/tungstate import. Probably responsible for the translocation of the substrate across the membrane. The polypeptide is Molybdate/tungstate transport system permease protein WtpB (Pyrococcus furiosus (strain ATCC 43587 / DSM 3638 / JCM 8422 / Vc1)).